Here is a 208-residue protein sequence, read N- to C-terminus: 3-demethoxyubiquinol 3-hydroxylase (208 aa).

6 residues coordinate Fe cation: Glu57, Glu87, His90, Glu139, Glu171, and His174.

It belongs to the COQ7 family. Fe cation is required as a cofactor.

It is found in the cell membrane. It catalyses the reaction a 5-methoxy-2-methyl-3-(all-trans-polyprenyl)benzene-1,4-diol + AH2 + O2 = a 3-demethylubiquinol + A + H2O. It functions in the pathway cofactor biosynthesis; ubiquinone biosynthesis. Its function is as follows. Catalyzes the hydroxylation of 2-nonaprenyl-3-methyl-6-methoxy-1,4-benzoquinol during ubiquinone biosynthesis. The polypeptide is 3-demethoxyubiquinol 3-hydroxylase (Burkholderia pseudomallei (strain 1106a)).